The chain runs to 447 residues: Glucose-6-phosphate isomerase (447 aa).

Residue glutamate 288 is the Proton donor of the active site. Catalysis depends on residues histidine 309 and lysine 423.

It belongs to the GPI family.

Its subcellular location is the cytoplasm. It carries out the reaction alpha-D-glucose 6-phosphate = beta-D-fructose 6-phosphate. The protein operates within carbohydrate biosynthesis; gluconeogenesis. It participates in carbohydrate degradation; glycolysis; D-glyceraldehyde 3-phosphate and glycerone phosphate from D-glucose: step 2/4. Catalyzes the reversible isomerization of glucose-6-phosphate to fructose-6-phosphate. The polypeptide is Glucose-6-phosphate isomerase (Lactobacillus johnsonii (strain CNCM I-12250 / La1 / NCC 533)).